Consider the following 129-residue polypeptide: MRHRKSGRQLNRNSSHRQAMFRNMASSLVSHEIIKTTLPKAKELRRVVEPLITLAKVDSVANRRLAFARTRNIETVAKLFNELGPRFAQRAGGYTRILKCGFRTGDNAPMAYIELVDRPEVAAEEATAE.

This sequence belongs to the bacterial ribosomal protein bL17 family. Part of the 50S ribosomal subunit. Contacts protein L32.

The chain is Large ribosomal subunit protein bL17 from Pasteurella multocida (strain Pm70).